A 107-amino-acid polypeptide reads, in one-letter code: U1-lycotoxin-Ls1e (107 aa).

Positions 1–20 (MMKVLVVVALLVTLISYSSS) are cleaved as a signal peptide. The propeptide occupies 21–41 (EGIDDLEADELLSLMANEQTR). 4 cysteine pairs are disulfide-bonded: Cys-44–Cys-59, Cys-51–Cys-68, Cys-58–Cys-86, and Cys-70–Cys-84.

Belongs to the neurotoxin 19 (CSTX) family. 04 (U1-Lctx) subfamily. Expressed by the venom gland.

Its subcellular location is the secreted. This chain is U1-lycotoxin-Ls1e, found in Lycosa singoriensis (Wolf spider).